The chain runs to 544 residues: Probable protein kinase UbiB (544 aa).

The chain crosses the membrane as a helical span at residues 1-21; that stretch reads MIFGELRRLYLIIGVMLSYGL. One can recognise a Protein kinase domain in the interval 123–500; it reads DFQQEPLASA…HVRQSQSRFL (378 aa). Residues 129–137 and lysine 151 contribute to the ATP site; that span reads LASASIAQV. Aspartate 286 (proton acceptor) is an active-site residue. A run of 2 helical transmembrane segments spans residues 499-519 and 520-540; these read FLFG…TQGA and DEGS…IIGW.

Belongs to the ABC1 family. UbiB subfamily.

Its subcellular location is the cell inner membrane. Its pathway is cofactor biosynthesis; ubiquinone biosynthesis [regulation]. Functionally, is probably a protein kinase regulator of UbiI activity which is involved in aerobic coenzyme Q (ubiquinone) biosynthesis. This chain is Probable protein kinase UbiB, found in Sodalis glossinidius (strain morsitans).